The sequence spans 396 residues: Putative cyclin-B3-1 (396 aa).

A disordered region spans residues 1 to 98; sequence MLRDGNKQSK…KVLDVTAKPK (98 aa). Positions 21-32 are enriched in polar residues; the sequence is KTTVKTSLQNRS. Positions 39–57 are enriched in low complexity; the sequence is VGRSKSRSISSIPSSAVAS. Residues 76-85 are compositionally biased toward polar residues; it reads GESSSSGNKD.

The protein belongs to the cyclin family. Cyclin AB subfamily.

The sequence is that of Putative cyclin-B3-1 (CYCB3-1) from Arabidopsis thaliana (Mouse-ear cress).